A 318-amino-acid chain; its full sequence is Methionyl-tRNA formyltransferase (318 aa).

114–117 (SVLP) is a (6S)-5,6,7,8-tetrahydrofolate binding site.

Belongs to the Fmt family.

It carries out the reaction L-methionyl-tRNA(fMet) + (6R)-10-formyltetrahydrofolate = N-formyl-L-methionyl-tRNA(fMet) + (6S)-5,6,7,8-tetrahydrofolate + H(+). In terms of biological role, attaches a formyl group to the free amino group of methionyl-tRNA(fMet). The formyl group appears to play a dual role in the initiator identity of N-formylmethionyl-tRNA by promoting its recognition by IF2 and preventing the misappropriation of this tRNA by the elongation apparatus. In Bdellovibrio bacteriovorus (strain ATCC 15356 / DSM 50701 / NCIMB 9529 / HD100), this protein is Methionyl-tRNA formyltransferase.